The primary structure comprises 513 residues: Solute carrier family 2, facilitated glucose transporter member 7 (513 aa).

At 1-21 the chain is on the cytoplasmic side; sequence MEDKEIGTPLPLPHSEARLQP. A helical transmembrane segment spans residues 22 to 42; sequence TLVLTTLSAAFGSVFQYGYNI. Over 43–78 the chain is Extracellular; the sequence is AVINTPHKVFKSFYNDTHFERHGTFMDESTLLLLWS. N-linked (GlcNAc...) asparagine glycosylation occurs at Asn-57. A helical transmembrane segment spans residues 79–99; that stretch reads CTVSMFPLGGLLGSLVVGLMV. Residues 100-107 lie on the Cytoplasmic side of the membrane; that stretch reads NKWGRKGT. A helical transmembrane segment spans residues 108-128; it reads LLINNVFAITSAVLMGVSKVA. Residues 129–138 lie on the Extracellular side of the membrane; the sequence is RAFELIILSR. Residues 139–159 form a helical membrane-spanning segment; that stretch reads VLVGICAGIAYSTLPMYLGEL. At 160-172 the chain is on the cytoplasmic side; sequence APQNLRGALGTMT. A helical transmembrane segment spans residues 173 to 193; that stretch reads EVFVIIGVLLAQIFSLQAILG. Over 194 to 198 the chain is Extracellular; the sequence is NATGW. Residues 199-219 traverse the membrane as a helical segment; the sequence is PILLALTGVPAVIQLLSLPFF. The Cytoplasmic segment spans residues 220 to 282; it reads PESPRYTLIE…LNLFTFRPLR (63 aa). The helical transmembrane segment at 283–303 threads the bilayer; that stretch reads WQLISIVVLMAGQQLSGINAV. D-glucose-binding positions include 295 to 296 and Asn-301; that span reads QQ. Residues 304-322 lie on the Extracellular side of the membrane; sequence NYYADVIYTSAGVDPTQSQ. The helical transmembrane segment at 323 to 343 threads the bilayer; sequence YVTLGSGVINLVMTLVSAVII. Residue Asn-332 coordinates D-glucose. Over 344 to 351 the chain is Cytoplasmic; that stretch reads ERLGRRIL. Residues 352–372 form a helical membrane-spanning segment; it reads LLSGYAICCSACLVLTVALLL. Residues 373–380 lie on the Extracellular side of the membrane; it reads QSTAPELS. A helical membrane pass occupies residues 381–401; that stretch reads YLSIVCVFSYIVGHSIGPSPV. Residues 402–416 lie on the Cytoplasmic side of the membrane; it reads PSVVRTEIVLQSSRT. A helical membrane pass occupies residues 417–437; it reads AAFTVDGAVHWLTNFIVGLTF. Topologically, residues 438–446 are extracellular; that stretch reads PSIQVAIGA. Residues 447–467 traverse the membrane as a helical segment; sequence YSFLVFAGVCILTAAYIYVVI. Over 468-513 the chain is Cytoplasmic; the sequence is PETKGRTFVEINCAFAKRNGVEFPEEKEVATAKPHTPSLPTKETAF. The segment at 494 to 513 is disordered; the sequence is KEVATAKPHTPSLPTKETAF.

The protein belongs to the major facilitator superfamily. Sugar transporter (TC 2.A.1.1) family. Glucose transporter subfamily.

The protein resides in the cell membrane. It is found in the apical cell membrane. The catalysed reaction is D-glucose(out) = D-glucose(in). It carries out the reaction D-fructose(out) = D-fructose(in). Its function is as follows. Probable sugar transporter. Even if its physiological substrate is subject to discussion, it is able to transport glucose and fructose. Does not transport galactose, 2-deoxy-d-glucose and xylose. The sequence is that of Solute carrier family 2, facilitated glucose transporter member 7 from Mus musculus (Mouse).